The following is a 159-amino-acid chain: Sec-independent protein translocase protein TatB (159 aa).

A helical transmembrane segment spans residues 1-21; it reads MIDIGLSKMALIGAVALIVIG.

It belongs to the TatB family. In terms of assembly, the Tat system comprises two distinct complexes: a TatABC complex, containing multiple copies of TatA, TatB and TatC subunits, and a separate TatA complex, containing only TatA subunits. Substrates initially bind to the TatABC complex, which probably triggers association of the separate TatA complex to form the active translocon.

It localises to the cell inner membrane. Its function is as follows. Part of the twin-arginine translocation (Tat) system that transports large folded proteins containing a characteristic twin-arginine motif in their signal peptide across membranes. Together with TatC, TatB is part of a receptor directly interacting with Tat signal peptides. TatB may form an oligomeric binding site that transiently accommodates folded Tat precursor proteins before their translocation. The protein is Sec-independent protein translocase protein TatB of Acidovorax sp. (strain JS42).